Here is a 462-residue protein sequence, read N- to C-terminus: Fumarate hydratase class II (462 aa).

Substrate-binding positions include 97 to 99, 127 to 130, 137 to 139, and threonine 185; these read SGT, HPND, and SSN. Histidine 186 functions as the Proton donor/acceptor in the catalytic mechanism. Serine 316 is a catalytic residue. Substrate-binding positions include serine 317 and 322–324; that span reads KVN.

This sequence belongs to the class-II fumarase/aspartase family. Fumarase subfamily. Homotetramer.

The protein resides in the cytoplasm. The catalysed reaction is (S)-malate = fumarate + H2O. The protein operates within carbohydrate metabolism; tricarboxylic acid cycle; (S)-malate from fumarate: step 1/1. Functionally, involved in the TCA cycle. Catalyzes the stereospecific interconversion of fumarate to L-malate. This is Fumarate hydratase class II from Bacillus subtilis (strain 168).